The chain runs to 284 residues: MFKKFKPVTPGTRQLVLPAFDELTTQGELSGKKTRKSVRPNKKLSFFKKSSGGRDNLGHISCRHRGGGAKRLYRVIDFKRNKDGIEAKVVSVEYDPNRSAYIALLSYADGEKRYILAPKGIKRGDQVISGEGSPFKLGCCMTLKSMPLGSTVHNIEMRPHSGGKLVRSAGLAAQVIAKTPGYVTLKMPSGEFRMLNEGCRATIGEVSNSDHNLCVDGKAGRKRWKGIRPTVRGTAMNPVDHPHGGGEGRHNGYIPRTPWGKVTKGLKTRDKRKSNKWIVKDRRK.

A disordered region spans residues 232–284 (RGTAMNPVDHPHGGGEGRHNGYIPRTPWGKVTKGLKTRDKRKSNKWIVKDRRK). Over residues 240-250 (DHPHGGGEGRH) the composition is skewed to basic and acidic residues. Positions 264–284 (KGLKTRDKRKSNKWIVKDRRK) are enriched in basic residues.

It belongs to the universal ribosomal protein uL2 family. As to quaternary structure, part of the 50S ribosomal subunit. Forms a bridge to the 30S subunit in the 70S ribosome.

In terms of biological role, one of the primary rRNA binding proteins. Required for association of the 30S and 50S subunits to form the 70S ribosome, for tRNA binding and peptide bond formation. It has been suggested to have peptidyltransferase activity; this is somewhat controversial. Makes several contacts with the 16S rRNA in the 70S ribosome. This is Large ribosomal subunit protein uL2 from Chlamydia abortus (strain DSM 27085 / S26/3) (Chlamydophila abortus).